The sequence spans 669 residues: Dymeclin (669 aa).

A lipid anchor (N-myristoyl glycine) is attached at glycine 2.

This sequence belongs to the dymeclin family. As to quaternary structure, interacts with GOLM1 and PPIB. Post-translationally, myristoylated in vitro; myristoylation is not essential for protein targeting to Golgi compartment. In terms of tissue distribution, expressed in most embryo-fetal and adult tissues. Abundant in primary chondrocytes, osteoblasts, cerebellum, kidney, lung, stomach, heart, pancreas and fetal brain. Very low or no expression in the spleen, thymus, esophagus, bladder and thyroid gland.

The protein localises to the cytoplasm. It localises to the golgi apparatus. Its subcellular location is the membrane. Necessary for correct organization of Golgi apparatus. Involved in bone development. The protein is Dymeclin (DYM) of Homo sapiens (Human).